Consider the following 340-residue polypeptide: Glycerol-3-phosphate dehydrogenase [NAD(P)+] (340 aa).

The NADPH site is built by S11, W12, R33, and K106. Sn-glycerol 3-phosphate-binding residues include K106, G137, and S139. Residue A141 participates in NADPH binding. Positions 192, 245, 255, 256, and 257 each coordinate sn-glycerol 3-phosphate. K192 acts as the Proton acceptor in catalysis. Residue R256 coordinates NADPH. The NADPH site is built by V280 and E282.

Belongs to the NAD-dependent glycerol-3-phosphate dehydrogenase family.

The protein localises to the cytoplasm. The catalysed reaction is sn-glycerol 3-phosphate + NAD(+) = dihydroxyacetone phosphate + NADH + H(+). It carries out the reaction sn-glycerol 3-phosphate + NADP(+) = dihydroxyacetone phosphate + NADPH + H(+). It participates in membrane lipid metabolism; glycerophospholipid metabolism. Functionally, catalyzes the reduction of the glycolytic intermediate dihydroxyacetone phosphate (DHAP) to sn-glycerol 3-phosphate (G3P), the key precursor for phospholipid synthesis. The protein is Glycerol-3-phosphate dehydrogenase [NAD(P)+] of Bacillus cereus (strain B4264).